Consider the following 40-residue polypeptide: Dihydrolipoyl dehydrogenase (40 aa).

36-40 (EKRGT) provides a ligand contact to FAD.

It belongs to the class-I pyridine nucleotide-disulfide oxidoreductase family. Homodimer. Requires FAD as cofactor.

It is found in the mitochondrion matrix. The enzyme catalyses N(6)-[(R)-dihydrolipoyl]-L-lysyl-[protein] + NAD(+) = N(6)-[(R)-lipoyl]-L-lysyl-[protein] + NADH + H(+). Functionally, lipoamide dehydrogenase is a component of the glycine cleavage system as well as of the alpha-ketoacid dehydrogenase complexes. The pyruvate dehydrogenase complex contains multiple copies of three enzymatic components: pyruvate dehydrogenase (E1), dihydrolipoamide acetyltransferase (E2) and lipoamide dehydrogenase (E3). This chain is Dihydrolipoyl dehydrogenase, found in Solanum tuberosum (Potato).